Reading from the N-terminus, the 392-residue chain is uncharacterized protein (392 aa).

It belongs to the glycosyltransferase 2 family.

This is an uncharacterized protein from Bacillus subtilis (strain 168).